Here is a 311-residue protein sequence, read N- to C-terminus: DNA repair and recombination protein RadA (311 aa).

ATP is bound at residue 104–111; sequence GEFGSGKS.

This sequence belongs to the eukaryotic RecA-like protein family.

In terms of biological role, involved in DNA repair and in homologous recombination. Binds and assemble on single-stranded DNA to form a nucleoprotein filament. Hydrolyzes ATP in a ssDNA-dependent manner and promotes DNA strand exchange between homologous DNA molecules. The polypeptide is DNA repair and recombination protein RadA (Methanosphaera stadtmanae (strain ATCC 43021 / DSM 3091 / JCM 11832 / MCB-3)).